Consider the following 199-residue polypeptide: Charged multivesicular body protein 1b (199 aa).

Coiled-coil stretches lie at residues 10–30 (NLKF…KEEK) and 178–199 (TSVA…RDQV). Residues 167–199 (ELPQGQTGSVGTSVASAEQDELSQRLAKLRDQV) are disordered. Positions 170-182 (QGQTGSVGTSVAS) are enriched in polar residues. Residues 186 to 196 (DELSQRLAKLR) carry the MIT-interacting motif motif.

This sequence belongs to the SNF7 family. In terms of assembly, probable peripherally associated component of the endosomal sorting required for transport complex III (ESCRT-III).

It localises to the cytoplasm. The protein resides in the cytosol. It is found in the endosome. Its subcellular location is the late endosome membrane. In terms of biological role, probable peripherally associated component of the endosomal sorting required for transport complex III (ESCRT-III) which is involved in multivesicular bodies (MVBs) formation and sorting of endosomal cargo proteins into MVBs. MVBs contain intraluminal vesicles (ILVs) that are generated by invagination and scission from the limiting membrane of the endosome and mostly are delivered to lysosomes enabling degradation of membrane proteins, such as stimulated growth factor receptors, lysosomal enzymes and lipids. The protein is Charged multivesicular body protein 1b (chmp1b) of Danio rerio (Zebrafish).